We begin with the raw amino-acid sequence, 184 residues long: Oligoribonuclease (184 aa).

Positions 8 to 169 (LIWIDLEMTG…EDIHESIIEL (162 aa)) constitute an Exonuclease domain. Tyr-129 is an active-site residue.

Belongs to the oligoribonuclease family.

The protein localises to the cytoplasm. In terms of biological role, 3'-to-5' exoribonuclease specific for small oligoribonucleotides. The polypeptide is Oligoribonuclease (Buchnera aphidicola subsp. Schizaphis graminum (strain Sg)).